The sequence spans 330 residues: GDP-mannose transporter (330 aa).

Residues 1–13 lie on the Cytoplasmic side of the membrane; it reads MSQLKVDNGPLSH. The chain crosses the membrane as a helical span at residues 14-34; the sequence is VANSGPISIGAYCFSSIMMTV. At 35 to 48 the chain is on the lumenal side; the sequence is TNKFVVNLKGFNMN. The helical transmembrane segment at 49 to 69 threads the bilayer; the sequence is FVMLFVQAAVCVNLLFFLRLL. Topologically, residues 70–81 are cytoplasmic; sequence GYAKFRPLNRTD. The helical transmembrane segment at 82–98 threads the bilayer; it reads AKNWFPITIFLVLMIYT. Residues 99 to 104 lie on the Lumenal side of the membrane; that stretch reads SSKSLQ. The chain crosses the membrane as a helical span at residues 105-124; the sequence is YLAVPIYTIFKNLTIILIAY. Residues 125 to 138 are Cytoplasmic-facing; the sequence is GEVLFFGGSVTAME. The helical transmembrane segment at 139-155 threads the bilayer; it reads LSSFLLMVLSSVVATLG. The Lumenal portion of the chain corresponds to 156–170; the sequence is DQQALKKTADAGASL. A helical transmembrane segment spans residues 171-191; it reads FNIGYMWMFINCLSSAAFVLV. The Cytoplasmic segment spans residues 192-203; it reads MRKRIKLTNFKD. A helical membrane pass occupies residues 204–224; that stretch reads FDTMFYNNILSMPVLLALSFL. Over 225 to 241 the chain is Lumenal; the sequence is MEDWSTENLTKNLSRDS. Residues 242–262 form a helical membrane-spanning segment; sequence VTAMIISGMTAVCISYCSGWC. At 263–269 the chain is on the cytoplasmic side; that stretch reads VRVTSST. The helical transmembrane segment at 270–290 threads the bilayer; sequence TYSMVGALNKLPIALSGLIFF. Residues 291-294 are Lumenal-facing; the sequence is DAPK. Residues 295 to 315 form a helical membrane-spanning segment; the sequence is NFLSIFSIFLGFLSGIVYAVA. The Cytoplasmic segment spans residues 316–330; the sequence is KQKKQQNPQPSAPIK.

This sequence belongs to the TPT transporter family. SLC35D subfamily. Homooligomer.

Its subcellular location is the golgi apparatus membrane. It localises to the cytoplasmic vesicle membrane. The protein resides in the endoplasmic reticulum membrane. Its function is as follows. Involved in the import of GDP-mannose from the cytoplasm into the Golgi lumen. This is GDP-mannose transporter (VRG4) from Kluyveromyces lactis (strain ATCC 8585 / CBS 2359 / DSM 70799 / NBRC 1267 / NRRL Y-1140 / WM37) (Yeast).